The chain runs to 609 residues: Kelch-like protein 20 (609 aa).

Positions 68-135 (CDVVLVVGAK…AYTSQITVEE (68 aa)) constitute a BTB domain. A BACK domain is found at 170 to 272 (CLGIRAFADT…SPKFLVGTVG (103 aa)). 6 Kelch repeats span residues 319-365 (VLFA…VLDD), 367-413 (LYAV…VLGG), 414-460 (FLYA…VLGG), 462-507 (LYAV…VYQD), 509-554 (IYAV…VVNG), and 556-601 (LMAV…VIKM).

As to quaternary structure, component of the BCR(KLHL20) E3 ubiquitin ligase complex, at least composed of CUL3, KLHL20 and RBX1. Interacts with PDZ-RhoGEF/ARHGEF11, DAPK1, PML and CORO7. Interacts with F-actin. Interacts with IFN-gamma (IFNG). Interacts (via kelch repeats) with IVNS1ABP (via kelch repeats); this interaction blocks the assembly of CUL3-KLHL20 complex.

It localises to the cytoplasm. Its subcellular location is the perinuclear region. The protein localises to the nucleus. The protein resides in the golgi apparatus. It is found in the trans-Golgi network. It localises to the cell projection. Its subcellular location is the axon. The protein localises to the dendrite. It functions in the pathway protein modification; protein ubiquitination. Functionally, substrate-specific adapter of a BCR (BTB-CUL3-RBX1) E3 ubiquitin-protein ligase complex involved in interferon response and anterograde Golgi to endosome transport. The BCR(KLHL20) E3 ubiquitin ligase complex mediates the ubiquitination of DAPK1, leading to its degradation by the proteasome, thereby acting as a negative regulator of apoptosis. The BCR(KLHL20) E3 ubiquitin ligase complex also specifically mediates 'Lys-33'-linked ubiquitination. Involved in anterograde Golgi to endosome transport by mediating 'Lys-33'-linked ubiquitination of CORO7, promoting interaction between CORO7 and EPS15, thereby facilitating actin polymerization and post-Golgi trafficking. Also acts as a regulator of endothelial migration during angiogenesis by controlling the activation of Rho GTPases. The BCR(KLHL20) E3 ubiquitin ligase complex acts as a regulator of neurite outgrowth by mediating ubiquitination and degradation of PDZ-RhoGEF/ARHGEF11. This Bos taurus (Bovine) protein is Kelch-like protein 20 (KLHL20).